We begin with the raw amino-acid sequence, 255 residues long: Ribonuclease HII (255 aa).

The RNase H type-2 domain occupies R72–R255. A divalent metal cation contacts are provided by D78, E79, and D170.

This sequence belongs to the RNase HII family. The cofactor is Mn(2+). Mg(2+) is required as a cofactor.

It is found in the cytoplasm. It catalyses the reaction Endonucleolytic cleavage to 5'-phosphomonoester.. Endonuclease that specifically degrades the RNA of RNA-DNA hybrids. This is Ribonuclease HII (rnhB) from Bacillus subtilis (strain 168).